The primary structure comprises 319 residues: HTH-type transcriptional regulator YidZ (319 aa).

An HTH lysR-type domain is found at 8–65; it reads LDLNLLLCLQLLMQERSVTKAAKRINVTPSAVSKSLAKLRAWFDDPLFVNSPLGLSPT. The H-T-H motif DNA-binding region spans 25-44; sequence VTKAAKRINVTPSAVSKSLA.

It belongs to the LysR transcriptional regulatory family.

Involved in anaerobic NO protection. The chain is HTH-type transcriptional regulator YidZ from Escherichia coli (strain K12 / MC4100 / BW2952).